The following is a 295-amino-acid chain: Probable WRKY transcription factor 46 (295 aa).

The segment at residues 98–166 is a DNA-binding region (WRKY); the sequence is QENGSIDDGH…YLGNHTCNNI (69 aa).

This sequence belongs to the WRKY group III family. In terms of assembly, binds to BZR2/BES1 to cooperatively regulate the expression of target genes. In terms of processing, phosphorylated and destabilized by ASK7/BIN2. Expressed in guard cells, hypocotyls, and in the vascular tissues of cotyledon and root. Mostly expressed in roots, at lower levels in leaves and petioles, and, to a lower extent, in stems, flowers and siliques.

The protein localises to the nucleus. In terms of biological role, transcription factor involved in the regulation of osmotic stress responses and stomatal movement. Interacts specifically with the W box (5'-(T)TGAC[CT]-3'), a frequently occurring elicitor-responsive cis-acting element. Positive regulator of EDS1-dependent defense against E.amylovora. Together with WRKY70 and WRKY53, promotes resistance to P.syringae, probably by enhancing salicylic acid (SA)- dependent genes. Contributes to the suppression of jasmonic acid (MeJA)-induced expression of PDF1.2. Together with WRKY54 and WRKY70, promotes brassinosteroid (BR)-regulated plant growth but prevent drought response by modulating gene expression. The chain is Probable WRKY transcription factor 46 (WRKY46) from Arabidopsis thaliana (Mouse-ear cress).